A 140-amino-acid chain; its full sequence is Midkine (140 aa).

The signal sequence occupies residues methionine 1–alanine 20. 5 disulfides stabilise this stretch: cysteine 34–cysteine 58, cysteine 42–cysteine 67, cysteine 49–cysteine 71, cysteine 81–cysteine 113, and cysteine 91–cysteine 123.

This sequence belongs to the pleiotrophin family. Homodimer. Interacts with ALK. Interacts with LRP1; promotes neuronal survival. Interacts with LRP2. Interacts with NCAM1. Interacts (via C-terminal) with PTPRZ1 (via chondroitin sulfate chains); this interaction is inhibited by PTN; this interaction promotes neuronal migration. Interacts with NCL; this interaction promotes NCL clustering and lateral movements of this complex into lipid rafts leading to MDK internalization. Interacts with LRP6 and LRP8: this interaction is calcium dependent. Interacts with ITGA4. Interacts with ITGA6. Interacts with ITGB1. Interacts with ITGA4:ITGB1 complex; this interaction mediates MDK-induced osteoblast cells migration through PXN phosphorylation. Interacts with ITGA6:ITGB1 complex; this interaction mediates MDK-induced neurite outgrowth. Interacts with NOTCH2; this interactio mediates a nuclear accumulation of NOTCH2 and therefore activation of NOTCH2 signaling leading to interaction between HES1 and STAT3. Interacts with GPC2 (via heparan sulfate chain); this interaction is inhibited by heparin followed by chondroitin sulfate E; this interaction induces GPC2 clustering through heparan sulfate chain; this interaction induces neuronal cell adhesion and neurite outgrowth. Interacts with SDC3; this interaction induces SDC3 clustering; this interaction induces neuronal cell adhesion and neurite outgrowth. Interacts with SDC1. Interacts with CSPG5; this interaction promotes elongation of oligodendroglial precursor-like cells. As to expression, expressed at a low level in arteries, and at higher levels in newly formed neointima. In brain, expressed in the caudate nucleus and the brain stem.

It localises to the secreted. In terms of biological role, developmentally regulated, secreted growth factor homologous to pleiotrophin (PTN), which has heparin binding activity. Binds anaplastic lymphoma kinase (ALK) which induces ALK activation and subsequent phosphorylation of the insulin receptor substrate (IRS1), followed by the activation of mitogen-activated protein kinase (MAPK) and PI3-kinase, and the induction of cell proliferation. Involved in neointima formation after arterial injury, possibly by mediating leukocyte recruitment. Also involved in early fetal adrenal gland development. Its function is as follows. Secreted protein that functions as a cytokine and growth factor and mediates its signal through cell-surface proteoglycan and non-proteoglycan receptors. Binds cell-surface proteoglycan receptors via their chondroitin sulfate (CS) groups. Thereby regulates many processes like inflammatory response, cell proliferation, cell adhesion, cell growth, cell survival, tissue regeneration, cell differentiation and cell migration. Participates in inflammatory processes by exerting two different activities. Firstly, mediates neutrophils and macrophages recruitment to the sites of inflammation both by direct action by cooperating namely with ITGB2 via LRP1 and by inducing chemokine expression. This inflammation can be accompanied by epithelial cell survival and smooth muscle cell migration after renal and vessel damage, respectively. Secondly, suppresses the development of tolerogenic dendric cells thereby inhibiting the differentiation of regulatory T cells and also promote T cell expansion through NFAT signaling and Th1 cell differentiation. Promotes tissue regeneration after injury or trauma. After heart damage negatively regulates the recruitment of inflammatory cells and mediates cell survival through activation of anti-apoptotic signaling pathways via MAPKs and AKT pathways through the activation of angiogenesis. Also facilitates liver regeneration as well as bone repair by recruiting macrophage at trauma site and by promoting cartilage development by facilitating chondrocyte differentiation. Plays a role in brain by promoting neural precursor cells survival and growth through interaction with heparan sulfate proteoglycans. Binds PTPRZ1 and promotes neuronal migration and embryonic neurons survival. Binds SDC3 or GPC2 and mediates neurite outgrowth and cell adhesion. Binds chondroitin sulfate E and heparin leading to inhibition of neuronal cell adhesion induced by binding with GPC2. Binds CSPG5 and promotes elongation of oligodendroglial precursor-like cells. Also binds ITGA6:ITGB1 complex; this interaction mediates MDK-induced neurite outgrowth. Binds LRP1; promotes neuronal survival. Binds ITGA4:ITGB1 complex; this interaction mediates MDK-induced osteoblast cells migration through PXN phosphorylation. Binds anaplastic lymphoma kinase (ALK) which induces ALK activation and subsequent phosphorylation of the insulin receptor substrate (IRS1), followed by the activation of mitogen-activated protein kinase (MAPK) and PI3-kinase, and the induction of cell proliferation. Promotes epithelial to mesenchymal transition through interaction with NOTCH2. During arteriogenesis, plays a role in vascular endothelial cell proliferation by inducing VEGFA expression and release which in turn induces nitric oxide synthase expression. Moreover activates vasodilation through nitric oxide synthase activation. Negatively regulates bone formation in response to mechanical load by inhibiting Wnt/beta-catenin signaling in osteoblasts. In addition plays a role in hippocampal development, working memory, auditory response, early fetal adrenal gland development and the female reproductive system. The protein is Midkine of Rattus norvegicus (Rat).